We begin with the raw amino-acid sequence, 592 residues long: 1,4-alpha-glucan branching enzyme GlgB 2 (592 aa).

Catalysis depends on Asp-274, which acts as the Nucleophile. Catalysis depends on Glu-327, which acts as the Proton donor.

It belongs to the glycosyl hydrolase 13 family. GlgB subfamily. As to quaternary structure, monomer.

It carries out the reaction Transfers a segment of a (1-&gt;4)-alpha-D-glucan chain to a primary hydroxy group in a similar glucan chain.. The protein operates within glycan biosynthesis; glycogen biosynthesis. Its function is as follows. Catalyzes the formation of the alpha-1,6-glucosidic linkages in glycogen by scission of a 1,4-alpha-linked oligosaccharide from growing alpha-1,4-glucan chains and the subsequent attachment of the oligosaccharide to the alpha-1,6 position. The protein is 1,4-alpha-glucan branching enzyme GlgB 2 of Streptomyces avermitilis (strain ATCC 31267 / DSM 46492 / JCM 5070 / NBRC 14893 / NCIMB 12804 / NRRL 8165 / MA-4680).